The following is a 499-amino-acid chain: MSKAHVIGLGKSGVAAARLLKREGWEVELSDGNTSKTLLQQQQELAAEQITVKLGQSLELNGDNLPQLIVVSPGVPWDIPVLIKARQLGIETIGEMELAWRNLRWRSQPQASLPWVGITGTNGKTTTTALIAAIFQAAELDAPACGNIGYAACEVALSWSGRGAGGREQGAGGDREVNSSSSPSLDWVIAEVSSYQIESSSSLAPRIGVWTTFTPDHLSRHKTLENYYNIKAKLLRQSELQVFNGDDAYLSQLGLSAWPNAYWTSVKGKDFLISEKGFYIENGWVVEKLTATSAPEPIVKVSTLRMVGEHNQQNLLMAVATARLAGINRDAIARAIQEFPGVPHRLEHICTWEGIDFINDSKATNYDAAEVGLASVKSPAILIAGGEAKAGDDTGWLAQIQTKAAAVLLIGSAAPAFAQRLQEVGYYSYEIVETMERAVPRSAELAKEYQAPVVLLSPACASFDQYPNFEVRGDRFRELCLAWAAGGKLQHNLMLSSSL.

120–126 (GTNGKTT) provides a ligand contact to ATP.

It belongs to the MurCDEF family.

The protein localises to the cytoplasm. It carries out the reaction UDP-N-acetyl-alpha-D-muramoyl-L-alanine + D-glutamate + ATP = UDP-N-acetyl-alpha-D-muramoyl-L-alanyl-D-glutamate + ADP + phosphate + H(+). It functions in the pathway cell wall biogenesis; peptidoglycan biosynthesis. Its function is as follows. Cell wall formation. Catalyzes the addition of glutamate to the nucleotide precursor UDP-N-acetylmuramoyl-L-alanine (UMA). In Nostoc punctiforme (strain ATCC 29133 / PCC 73102), this protein is UDP-N-acetylmuramoylalanine--D-glutamate ligase.